Consider the following 201-residue polypeptide: FMN-dependent NADH:quinone oxidoreductase (201 aa).

Residues Ser10, 16-18 (SQS), 96-99 (MYNF), and 140-143 (SRGG) contribute to the FMN site.

It belongs to the azoreductase type 1 family. As to quaternary structure, homodimer. The cofactor is FMN.

The enzyme catalyses 2 a quinone + NADH + H(+) = 2 a 1,4-benzosemiquinone + NAD(+). It carries out the reaction N,N-dimethyl-1,4-phenylenediamine + anthranilate + 2 NAD(+) = 2-(4-dimethylaminophenyl)diazenylbenzoate + 2 NADH + 2 H(+). Functionally, quinone reductase that provides resistance to thiol-specific stress caused by electrophilic quinones. Its function is as follows. Also exhibits azoreductase activity. Catalyzes the reductive cleavage of the azo bond in aromatic azo compounds to the corresponding amines. This chain is FMN-dependent NADH:quinone oxidoreductase, found in Escherichia coli O6:K15:H31 (strain 536 / UPEC).